The chain runs to 514 residues: ATP synthase subunit alpha (514 aa).

Residue 170–177 (GDRQIGKT) coordinates ATP.

It belongs to the ATPase alpha/beta chains family. In terms of assembly, F-type ATPases have 2 components, CF(1) - the catalytic core - and CF(0) - the membrane proton channel. CF(1) has five subunits: alpha(3), beta(3), gamma(1), delta(1), epsilon(1). CF(0) has three main subunits: a(1), b(2) and c(9-12). The alpha and beta chains form an alternating ring which encloses part of the gamma chain. CF(1) is attached to CF(0) by a central stalk formed by the gamma and epsilon chains, while a peripheral stalk is formed by the delta and b chains.

It localises to the cell inner membrane. The catalysed reaction is ATP + H2O + 4 H(+)(in) = ADP + phosphate + 5 H(+)(out). Produces ATP from ADP in the presence of a proton gradient across the membrane. The alpha chain is a regulatory subunit. The sequence is that of ATP synthase subunit alpha from Pseudomonas fluorescens (strain ATCC BAA-477 / NRRL B-23932 / Pf-5).